A 982-amino-acid chain; its full sequence is Coatomer subunit beta (982 aa).

4 HEAT repeats span residues 16–53 (SGAP…NGEP), 130–167 (ELVE…RFPE), 241–278 (YDKG…SPTA), and 317–352 (LQDS…NQNS).

In terms of assembly, oligomeric complex that consists of at least the alpha, beta, beta', gamma, delta, epsilon and zeta subunits.

The protein resides in the cytoplasm. The protein localises to the golgi apparatus membrane. It is found in the cytoplasmic vesicle. Its subcellular location is the COPI-coated vesicle membrane. The coatomer is a cytosolic protein complex that binds to dilysine motifs and reversibly associates with Golgi non-clathrin-coated vesicles, which further mediate biosynthetic protein transport from the ER, via the Golgi up to the trans Golgi network. Coatomer complex is required for budding from Golgi membranes, and is essential for the retrograde Golgi-to-ER transport of dilysine-tagged proteins. In Trypanosoma brucei brucei, this protein is Coatomer subunit beta.